Consider the following 238-residue polypeptide: Ribonuclease PH (238 aa).

Residues Arg-86 and 124-126 (GTR) contribute to the phosphate site.

It belongs to the RNase PH family. Homohexameric ring arranged as a trimer of dimers.

The enzyme catalyses tRNA(n+1) + phosphate = tRNA(n) + a ribonucleoside 5'-diphosphate. Phosphorolytic 3'-5' exoribonuclease that plays an important role in tRNA 3'-end maturation. Removes nucleotide residues following the 3'-CCA terminus of tRNAs; can also add nucleotides to the ends of RNA molecules by using nucleoside diphosphates as substrates, but this may not be physiologically important. Probably plays a role in initiation of 16S rRNA degradation (leading to ribosome degradation) during starvation. This is Ribonuclease PH from Actinobacillus succinogenes (strain ATCC 55618 / DSM 22257 / CCUG 43843 / 130Z).